We begin with the raw amino-acid sequence, 207 residues long: Varv peptide A/Kalata-B1 (207 aa).

A signal peptide spans 1 to 20 (MKMFIVLVLSAAFALPAAFA). Residues 21-66 (TEQDVITLQAYEELLKNGAANGMTKTVISSPVLEEALVSYSKNKLG) constitute a propeptide that is removed on maturation. The cyclopeptide (Gly-Asn) cross-link spans 67–95 (GLPVCGETCVGGTCNTPGCSCSWPVCTRN). Disulfide bonds link cysteine 71–cysteine 85, cysteine 75–cysteine 87, and cysteine 80–cysteine 92. The propeptide occupies 96 to 120 (SLESTKSANPLLEEALTAFAKKGLG). Residues 121–149 (GLPVCGETCVGGTCNTPGCTCSWPVCTRN) constitute a cross-link (cyclopeptide (Gly-Asn)). Disulfide bonds link cysteine 125–cysteine 139, cysteine 129–cysteine 141, and cysteine 134–cysteine 146. The propeptide occupies 150-174 (ALETQKPNHLLEEALVAFAKKGNLG). Residues 175 to 203 (GLPVCGETCVGGTCNTPGCSCSWPVCTRN) constitute a cross-link (cyclopeptide (Gly-Asn)). Intrachain disulfides connect cysteine 179/cysteine 193, cysteine 183/cysteine 195, and cysteine 188/cysteine 200. The propeptide occupies 204 to 207 (ALAM).

Belongs to the cyclotide family. Moebius subfamily. Varv peptide A and kalata-B1 are cyclic peptides.

Its function is as follows. Probably participates in a plant defense mechanism. Has hemolytic activity. This chain is Varv peptide A/Kalata-B1, found in Viola odorata (Sweet violet).